The chain runs to 490 residues: Chromosomal replication initiator protein DnaA (490 aa).

The domain I, interacts with DnaA modulators stretch occupies residues 1-75 (MAVSSDAEQK…SELWKQEDAD (75 aa)). Residues 75–145 (DLLKIEIVVR…SEFRHNVLGS (71 aa)) are domain II. Residues 146–368 (PLDPRYTFGS…GAFNQLLFRQ (223 aa)) are domain III, AAA+ region. 4 residues coordinate ATP: Gly-192, Gly-194, Lys-195, and Thr-196. The tract at residues 369 to 490 (SFEPQITIDR…LLRRLINDQA (122 aa)) is domain IV, binds dsDNA.

The protein belongs to the DnaA family. In terms of assembly, oligomerizes as a right-handed, spiral filament on DNA at oriC.

It is found in the cytoplasm. In terms of biological role, plays an essential role in the initiation and regulation of chromosomal replication. ATP-DnaA binds to the origin of replication (oriC) to initiate formation of the DNA replication initiation complex once per cell cycle. Binds the DnaA box (a 9 base pair repeat at the origin) and separates the double-stranded (ds)DNA. Forms a right-handed helical filament on oriC DNA; dsDNA binds to the exterior of the filament while single-stranded (ss)DNA is stabiized in the filament's interior. The ATP-DnaA-oriC complex binds and stabilizes one strand of the AT-rich DNA unwinding element (DUE), permitting loading of DNA polymerase. After initiation quickly degrades to an ADP-DnaA complex that is not apt for DNA replication. Binds acidic phospholipids. The protein is Chromosomal replication initiator protein DnaA of Mesorhizobium japonicum (strain LMG 29417 / CECT 9101 / MAFF 303099) (Mesorhizobium loti (strain MAFF 303099)).